The chain runs to 354 residues: Protein C42 (354 aa).

A Nuclear localization signal motif is present at residues 349 to 352 (KRKK).

Belongs to the baculoviridae C42 protein family.

The protein resides in the host nucleus. The polypeptide is Protein C42 (Orgyia pseudotsugata (Douglas-fir tussock moth)).